The primary structure comprises 206 residues: Outer-membrane lipoprotein carrier protein (206 aa).

Residues 1-20 (MFYLIKKLPKFILFSLYLYA) form the signal peptide.

Belongs to the LolA family. Monomer.

It localises to the periplasm. Functionally, participates in the translocation of lipoproteins from the inner membrane to the outer membrane. Only forms a complex with a lipoprotein if the residue after the N-terminal Cys is not an aspartate (The Asp acts as a targeting signal to indicate that the lipoprotein should stay in the inner membrane). The chain is Outer-membrane lipoprotein carrier protein from Wigglesworthia glossinidia brevipalpis.